Here is a 1728-residue protein sequence, read N- to C-terminus: MRRLILSQTLRVAGRHRPPVAMFLQRFYRGHGISTALPLHYSKRHRKREGRMYGKPLRPVSDGENGASGDGGVLTRWEAVVSSRHQCESPVQTLAKSEKPKKAENTVAGKMTGSSRFSHRRDHSAYPSGVQPAPLATSGLPTQSSERQQQKQIGQQQVPLDALHRLFKVHAVMRTNYEALGKCTKVLKSFSTACAEALLQLGVLQKEQPSAMERKGFIDVQLCKSRVTEASKNGTSSPCFVLPPESPLYRTTIKFPTITVEHVLTTTVPAGCGAKDSGGDIMSVDMEGAAPFPMGHCESRPSTSAGNGVTVEYDCEGDVLSHGAAWNSIIEGFGQLALNLKQNASVSDFAQLAETLAYFKWVKDEEQVGWGTEDCVVKKFREAMANAKDTSASGSDPNTSDVSAALAAIAESFLRKIPRVDCIGSAVVHRGGERTAPSVHAIDVMLNLALRMCLSQWHAMSHFERMNIVLFCTYPWFAEDLSIAAGLCLTQSYLQSLLRADADVTYQHTFHYVRRVSRLCWPCIHDTDSAPVKKLLFPRDPQGTAVSSHALEAVSVEEKDNQLNQKEGLQGEEQATTTSESKLMWLPSFKDASCVSYGSSMKQRAAYELLLLWMTCVNPSGLHRSSPHGRYVSATGIAIIDVDLFVTQRFRTGKSKDEWLLLHPVEGDVVASVTIRTMVQHCETPYALTRLFFCNFHSVLPHIWGGIGARRREIIWTAWCRAVAQPLVNTLSGSDEGQREDDGGMQTLQITVDNADRTLDYLKPLISALTSDELFLRLIMRCADKSLEEMACEIGSGNNTLPLSKWCAQLAGFVYSVAFALHCRAKREGCNRDGGPSRPNTATDSANKKVVSGKQTDNLPKGTQEDISDLQLQFKAAVSALLRKLSAGDTQVAEQLLHHFYEPHFSGDQEREVVEDIQRHLQQVCDSQSRDALHAWIECSARASCEATVPLKEELLCKWQRTVLEADAGLPVVLPTIVECCRGLVGLVKKRGRNISGRRQGQQRGTESTTVGEESSCKEVFSKEELPVVITVLSRAMLTRTSTVSTVGLTKISSEISTLLSSCGYETADGNTSGGGRNGRELCDTNTATITSATAGERTVELELILSGEIDQKAGELPWITILEAVQLQLVPYTVVKNLLTSFKGGCDNGKERLRWQELQRDFQRKRHHRLVGNTLVFRWYGCAVPNDEGWEDGSGLMRPMAEDRDNVHSASHQGRTSTELGAFTRRLLKTLARAEVTRLDDRKEITTQTFVVGPSDDSATRHPTPGQEEDANLQRLDLLFRVHTLAAHILMTASTKKPHMIHELYDTLLHLVERVMPTTPNAPGNASDLLLLWLVGSAVAVGLRFRPNFLIKWPSTPEVSSGNLKSCPSAEEKTVHILRDIEPYLQSELLRPTVRLRFVINVLVALRSLELLGARIDVEGLHMDQLLVRASADRRLLSRHVNLFLIGCSALQSTQSSILHTALHLREAKYNLSFAEIERAFVAIALSADTFARQHEALMEQNYQQQQNRTLSVTVAANNTTPALRVSPVQLRHAWSALGRRVLENAGESPTDLFVRGLQCAAAVGCIDSALYQQLLSYVVEFRWEDLHILDWVMILRTVRQSFENRRNLEAYLKEPLQAFMLTMTDSGDNSTEQSVQKVNLKNHEGEQLLEGLCLFAEALPGLFIGDRELWGLLWQALGSQWSACFNAASNIEEQQRITAWLQEINASYAWAARAAGFRGLDEPTAL.

The transit peptide at 1 to 117 directs the protein to the mitochondrion; the sequence is MRRLILSQTL…AGKMTGSSRF (117 aa). Disordered regions lie at residues 45 to 71, 88 to 156, and 829 to 863; these read HRKREGRMYGKPLRPVSDGENGASGDG, ESPV…IGQQ, and GCNRDGGPSRPNTATDSANKKVVSGKQTDNLPKGT.

Component of the mitochondrial 3' processome (MPsome) complex composed at least of terminal uridylyltransferase KRET1/TUT1, 3'-5' exonuclease DSS1, MPSS1, MPSS2 and MPSS3. Within the complex, interacts with KRET1.

Its subcellular location is the mitochondrion. Its function is as follows. As part of the mitochondrial 3' processome (MPsome), involved in the maturation of guided RNA (gRNA) precursors. This chain is Mitochondrial 3' processome subunit 1, found in Trypanosoma brucei brucei.